Consider the following 203-residue polypeptide: Small ribosomal subunit protein uS4 (203 aa).

Residues Arg-93–Ala-173 form the S4 RNA-binding domain.

This sequence belongs to the universal ribosomal protein uS4 family. As to quaternary structure, part of the 30S ribosomal subunit. Contacts protein S5. The interaction surface between S4 and S5 is involved in control of translational fidelity.

Its function is as follows. One of the primary rRNA binding proteins, it binds directly to 16S rRNA where it nucleates assembly of the body of the 30S subunit. Functionally, with S5 and S12 plays an important role in translational accuracy. This Chlorobium phaeobacteroides (strain DSM 266 / SMG 266 / 2430) protein is Small ribosomal subunit protein uS4.